The primary structure comprises 227 residues: Cytidylate kinase (227 aa).

12-20 (GPSGAGKGT) is an ATP binding site.

Belongs to the cytidylate kinase family. Type 1 subfamily.

The protein resides in the cytoplasm. It catalyses the reaction CMP + ATP = CDP + ADP. It carries out the reaction dCMP + ATP = dCDP + ADP. The chain is Cytidylate kinase from Salmonella choleraesuis (strain SC-B67).